Reading from the N-terminus, the 152-residue chain is uncharacterized protein (152 aa).

This is an uncharacterized protein from Homo sapiens (Human).